We begin with the raw amino-acid sequence, 475 residues long: Ribulose bisphosphate carboxylase large chain (475 aa).

Positions 1–2 are excised as a propeptide; the sequence is MS. Proline 3 carries the post-translational modification N-acetylproline. Lysine 14 is subject to N6,N6,N6-trimethyllysine. Substrate contacts are provided by asparagine 123 and threonine 173. Residue lysine 175 is the Proton acceptor of the active site. Residue lysine 177 coordinates substrate. Positions 201, 203, and 204 each coordinate Mg(2+). Residue lysine 201 is modified to N6-carboxylysine. Histidine 294 acts as the Proton acceptor in catalysis. 3 residues coordinate substrate: arginine 295, histidine 327, and serine 379.

The protein belongs to the RuBisCO large chain family. Type I subfamily. As to quaternary structure, heterohexadecamer of 8 large chains and 8 small chains; disulfide-linked. The disulfide link is formed within the large subunit homodimers. Mg(2+) serves as cofactor. Post-translationally, the disulfide bond which can form in the large chain dimeric partners within the hexadecamer appears to be associated with oxidative stress and protein turnover.

It localises to the plastid. The protein resides in the chloroplast. The enzyme catalyses 2 (2R)-3-phosphoglycerate + 2 H(+) = D-ribulose 1,5-bisphosphate + CO2 + H2O. The catalysed reaction is D-ribulose 1,5-bisphosphate + O2 = 2-phosphoglycolate + (2R)-3-phosphoglycerate + 2 H(+). In terms of biological role, ruBisCO catalyzes two reactions: the carboxylation of D-ribulose 1,5-bisphosphate, the primary event in carbon dioxide fixation, as well as the oxidative fragmentation of the pentose substrate in the photorespiration process. Both reactions occur simultaneously and in competition at the same active site. The chain is Ribulose bisphosphate carboxylase large chain from Alnus incana (White alder).